The sequence spans 230 residues: Large ribosomal subunit protein uL1 (230 aa).

It belongs to the universal ribosomal protein uL1 family. In terms of assembly, part of the 50S ribosomal subunit.

Its function is as follows. Binds directly to 23S rRNA. The L1 stalk is quite mobile in the ribosome, and is involved in E site tRNA release. In terms of biological role, protein L1 is also a translational repressor protein, it controls the translation of the L11 operon by binding to its mRNA. The protein is Large ribosomal subunit protein uL1 of Leuconostoc mesenteroides subsp. mesenteroides (strain ATCC 8293 / DSM 20343 / BCRC 11652 / CCM 1803 / JCM 6124 / NCDO 523 / NBRC 100496 / NCIMB 8023 / NCTC 12954 / NRRL B-1118 / 37Y).